Here is a 270-residue protein sequence, read N- to C-terminus: Aliphatic sulfonates import ATP-binding protein SsuB 2 (270 aa).

An ABC transporter domain is found at L17 to A241. Position 50 to 57 (G50 to S57) interacts with ATP.

It belongs to the ABC transporter superfamily. Aliphatic sulfonates importer (TC 3.A.1.17.2) family. In terms of assembly, the complex is composed of two ATP-binding proteins (SsuB), two transmembrane proteins (SsuC) and a solute-binding protein (SsuA).

It is found in the cell inner membrane. The catalysed reaction is ATP + H2O + aliphatic sulfonate-[sulfonate-binding protein]Side 1 = ADP + phosphate + aliphatic sulfonateSide 2 + [sulfonate-binding protein]Side 1.. Part of the ABC transporter complex SsuABC involved in aliphatic sulfonates import. Responsible for energy coupling to the transport system. This is Aliphatic sulfonates import ATP-binding protein SsuB 2 from Burkholderia cenocepacia (strain HI2424).